The sequence spans 339 residues: Nicotinate-nucleotide--dimethylbenzimidazole phosphoribosyltransferase (339 aa).

Glu306 functions as the Proton acceptor in the catalytic mechanism.

The protein belongs to the CobT family.

The enzyme catalyses 5,6-dimethylbenzimidazole + nicotinate beta-D-ribonucleotide = alpha-ribazole 5'-phosphate + nicotinate + H(+). It participates in nucleoside biosynthesis; alpha-ribazole biosynthesis; alpha-ribazole from 5,6-dimethylbenzimidazole: step 1/2. Catalyzes the synthesis of alpha-ribazole-5'-phosphate from nicotinate mononucleotide (NAMN) and 5,6-dimethylbenzimidazole (DMB). The polypeptide is Nicotinate-nucleotide--dimethylbenzimidazole phosphoribosyltransferase (Brucella abortus (strain S19)).